The following is a 395-amino-acid chain: Putative nickel insertion protein (395 aa).

It belongs to the LarC family.

The polypeptide is Putative nickel insertion protein (Archaeoglobus fulgidus (strain ATCC 49558 / DSM 4304 / JCM 9628 / NBRC 100126 / VC-16)).